The primary structure comprises 447 residues: Argininosuccinate synthase (447 aa).

ATP contacts are provided by residues 20–28 (AFSGGLDTS) and alanine 46. Tyrosine 102 is a binding site for L-citrulline. 2 residues coordinate ATP: glycine 132 and threonine 134. L-aspartate is bound by residues threonine 134, asparagine 138, and aspartate 139. Residue asparagine 138 coordinates L-citrulline. Residue aspartate 139 coordinates ATP. Arginine 142 and serine 195 together coordinate L-citrulline. Aspartate 197 is a binding site for ATP. Threonine 204, glutamate 206, and glutamate 283 together coordinate L-citrulline.

Belongs to the argininosuccinate synthase family. Type 2 subfamily. In terms of assembly, homotetramer.

The protein resides in the cytoplasm. The catalysed reaction is L-citrulline + L-aspartate + ATP = 2-(N(omega)-L-arginino)succinate + AMP + diphosphate + H(+). It participates in amino-acid biosynthesis; L-arginine biosynthesis; L-arginine from L-ornithine and carbamoyl phosphate: step 2/3. The protein is Argininosuccinate synthase (argG) of Neisseria meningitidis serogroup B (strain ATCC BAA-335 / MC58).